We begin with the raw amino-acid sequence, 211 residues long: ATP-dependent Clp protease proteolytic subunit (211 aa).

Ser-114 acts as the Nucleophile in catalysis. The active site involves His-139.

This sequence belongs to the peptidase S14 family. Fourteen ClpP subunits assemble into 2 heptameric rings which stack back to back to give a disk-like structure with a central cavity, resembling the structure of eukaryotic proteasomes.

The protein localises to the cytoplasm. The enzyme catalyses Hydrolysis of proteins to small peptides in the presence of ATP and magnesium. alpha-casein is the usual test substrate. In the absence of ATP, only oligopeptides shorter than five residues are hydrolyzed (such as succinyl-Leu-Tyr-|-NHMec, and Leu-Tyr-Leu-|-Tyr-Trp, in which cleavage of the -Tyr-|-Leu- and -Tyr-|-Trp bonds also occurs).. Its function is as follows. Cleaves peptides in various proteins in a process that requires ATP hydrolysis. Has a chymotrypsin-like activity. Plays a major role in the degradation of misfolded proteins. This is ATP-dependent Clp protease proteolytic subunit from Pseudomonas fluorescens (strain SBW25).